The primary structure comprises 207 residues: NADH-quinone oxidoreductase subunit C (207 aa).

The protein belongs to the complex I 30 kDa subunit family. In terms of assembly, NDH-1 is composed of 14 different subunits. Subunits NuoB, C, D, E, F, and G constitute the peripheral sector of the complex.

Its subcellular location is the cell inner membrane. It carries out the reaction a quinone + NADH + 5 H(+)(in) = a quinol + NAD(+) + 4 H(+)(out). NDH-1 shuttles electrons from NADH, via FMN and iron-sulfur (Fe-S) centers, to quinones in the respiratory chain. The immediate electron acceptor for the enzyme in this species is believed to be ubiquinone. Couples the redox reaction to proton translocation (for every two electrons transferred, four hydrogen ions are translocated across the cytoplasmic membrane), and thus conserves the redox energy in a proton gradient. This Bordetella pertussis (strain Tohama I / ATCC BAA-589 / NCTC 13251) protein is NADH-quinone oxidoreductase subunit C.